Consider the following 419-residue polypeptide: CinA-like protein (419 aa).

The protein belongs to the CinA family.

This is CinA-like protein from Leptospira borgpetersenii serovar Hardjo-bovis (strain JB197).